The sequence spans 733 residues: Methylmalonyl-CoA mutase large subunit (733 aa).

Residues 1-10 (MRIPEFDDIE) are compositionally biased toward acidic residues. Residues 1 to 22 (MRIPEFDDIELGAGGGPSGSAE) are disordered. 6 residues coordinate (R)-methylmalonyl-CoA: tyrosine 78, methionine 81, threonine 88, arginine 90, tyrosine 92, and serine 117. The cob(II)alamin site is built by phenylalanine 120 and alanine 142. The (R)-methylmalonyl-CoA site is built by threonine 198 and glutamine 200. Positions 209 and 210 each coordinate cob(II)alamin. The (R)-methylmalonyl-CoA site is built by arginine 210, histidine 247, arginine 286, and serine 288. 11 residues coordinate cob(II)alamin: glycine 336, glutamate 373, alanine 376, glycine 612, histidine 613, aspartate 614, arginine 615, serine 658, leucine 660, glycine 689, and threonine 712. A B12-binding domain is found at 600 to 732 (RPRILVAKMG…KRLAADLGHE (133 aa)).

Belongs to the methylmalonyl-CoA mutase family. Heterodimer of an alpha and a beta chain. Adenosylcob(III)alamin is required as a cofactor.

The catalysed reaction is (R)-methylmalonyl-CoA = succinyl-CoA. Its function is as follows. Catalyzes the isomerization of succinyl-CoA to methylmalonyl-CoA during synthesis of propionate from tricarboxylic acid-cycle intermediates. This conversion most likely represents an important source of building blocks for polyketide antibiotic biosynthesis. It is unable to catalyze the conversion of isobutyryl-CoA into N-butyryl-CoA. The protein is Methylmalonyl-CoA mutase large subunit (mutB) of Streptomyces virginiae (Streptomyces cinnamonensis).